A 758-amino-acid chain; its full sequence is Vitamin K-dependent gamma-carboxylase (758 aa).

Residues 1–22 are disordered; the sequence is MAVSAGSARTSPSSDKVQKDKA. Ala2 carries the N-acetylalanine modification. Residues 2–60 are Cytoplasmic-facing; the sequence is AVSAGSARTSPSSDKVQKDKAELISGPRQDSRIGKLLGFEWTDLSSWRRLVTLLNRPTD. Residues 61 to 81 form a helical membrane-spanning segment; sequence PASLAVFRFLFGFLMVLDIPQ. Residues 82-113 are Lumenal-facing; sequence ERGLSSLDRKYLDGLDVCRFPLLDALRPLPLD. A disulfide bridge links Cys99 with Cys450. The helical transmembrane segment at 114–134 threads the bilayer; the sequence is WMYLVYTIMFLGALGMMLGLC. The Cytoplasmic portion of the chain corresponds to 135–136; that stretch reads YR. Residues 137–157 form a helical membrane-spanning segment; the sequence is ISCVLFLLPYWYVFLLDKTSW. The Lumenal portion of the chain corresponds to 158 to 292; that stretch reads NNHSYLYGLL…VSYFHCMNSQ (135 aa). Lys218 functions as the Proton acceptor in the catalytic mechanism. The chain crosses the membrane as a helical span at residues 293–313; it reads LFSIGMFSYVMLASSPLFCSP. Residues 314–361 lie on the Cytoplasmic side of the membrane; the sequence is EWPRKLVSYCPRRLQQLLPLKAAPQPSVSCVYKRSRGKSGQKPGLRHQ. Residues 362–382 form a helical membrane-spanning segment; sequence LGAAFTLLYLLEQLFLPYSHF. Topologically, residues 383–758 are lumenal; sequence LTQGYNNWTN…SNPDPVHSEF (376 aa). Residues Asn459 and Asn550 are each glycosylated (N-linked (GlcNAc...) asparagine). The segment at 732–758 is disordered; it reads GELNPSNTDSSHSNPPESNPDPVHSEF. Residues 735-747 are compositionally biased toward polar residues; that stretch reads NPSNTDSSHSNPP.

This sequence belongs to the vitamin K-dependent gamma-carboxylase family. Monomer. May interact with CALU.

The protein resides in the endoplasmic reticulum membrane. The enzyme catalyses 4-carboxy-L-glutamyl-[protein] + 2,3-epoxyphylloquinone + H2O + H(+) = phylloquinol + L-glutamyl-[protein] + CO2 + O2. Mediates the vitamin K-dependent carboxylation of glutamate residues to calcium-binding gamma-carboxyglutamate (Gla) residues with the concomitant conversion of the reduced hydroquinone form of vitamin K to vitamin K epoxide. Catalyzes gamma-carboxylation of various proteins, such as blood coagulation factors (F2, F7, F9 and F10), osteocalcin (BGLAP) or matrix Gla protein (MGP). The chain is Vitamin K-dependent gamma-carboxylase (GGCX) from Homo sapiens (Human).